We begin with the raw amino-acid sequence, 657 residues long: Threonine--tRNA ligase (657 aa).

Residues 7–70 (DRQQVIITLP…TENARVSIIT (64 aa)) enclose the TGS domain. A catalytic region spans residues 253 to 555 (DHRKLGAELG…LIEHTAGNFP (303 aa)). Zn(2+) contacts are provided by C351, H402, and H532.

It belongs to the class-II aminoacyl-tRNA synthetase family. Homodimer. Zn(2+) serves as cofactor.

Its subcellular location is the cytoplasm. It carries out the reaction tRNA(Thr) + L-threonine + ATP = L-threonyl-tRNA(Thr) + AMP + diphosphate + H(+). Its function is as follows. Catalyzes the attachment of threonine to tRNA(Thr) in a two-step reaction: L-threonine is first activated by ATP to form Thr-AMP and then transferred to the acceptor end of tRNA(Thr). Also edits incorrectly charged L-seryl-tRNA(Thr). In Chlorobaculum tepidum (strain ATCC 49652 / DSM 12025 / NBRC 103806 / TLS) (Chlorobium tepidum), this protein is Threonine--tRNA ligase.